An 885-amino-acid chain; its full sequence is Chitobiase (885 aa).

The N-terminal stretch at 1–27 is a signal peptide; it reads MNAFKLSALARLTATMGFLGGMGSAMA. Cystine bridges form between cysteine 56-cysteine 66, cysteine 400-cysteine 408, and cysteine 505-cysteine 578. Glutamate 540 acts as the Proton donor in catalysis. Residues 866-885 are disordered; that stretch reads EVQVRSVSPDGKRYSRAEKV. Positions 875–885 are enriched in basic and acidic residues; sequence DGKRYSRAEKV.

The protein belongs to the glycosyl hydrolase 20 family. As to quaternary structure, monomer.

The protein resides in the periplasm. It carries out the reaction Hydrolysis of terminal non-reducing N-acetyl-D-hexosamine residues in N-acetyl-beta-D-hexosaminides.. The protein operates within glycan degradation; chitin degradation. In terms of biological role, digests the beta-1,4-glycosidic bonds in N-acetylglucosamine (GlcNAc) oligomers (mainly dimers). This Serratia marcescens protein is Chitobiase (chb).